A 265-amino-acid polypeptide reads, in one-letter code: Uridylate kinase (265 aa).

The interval 1–29 is disordered; it reads MTESREPHVAGSAAPRPEPANGLASGQPS. ATP is bound at residue 40-43; sequence KLGG. Glycine 81 lines the UMP pocket. Positions 82 and 86 each coordinate ATP. Residues aspartate 101 and 162–169 each bind UMP; that span reads MGLPYFST. Residues phenylalanine 195 and aspartate 198 each contribute to the ATP site.

It belongs to the UMP kinase family. As to quaternary structure, homohexamer.

The protein resides in the cytoplasm. The enzyme catalyses UMP + ATP = UDP + ADP. The protein operates within pyrimidine metabolism; CTP biosynthesis via de novo pathway; UDP from UMP (UMPK route): step 1/1. With respect to regulation, inhibited by UTP. Functionally, catalyzes the reversible phosphorylation of UMP to UDP. The chain is Uridylate kinase from Mycolicibacterium paratuberculosis (strain ATCC BAA-968 / K-10) (Mycobacterium paratuberculosis).